A 960-amino-acid chain; its full sequence is Cyclin-dependent kinase-like 5 (960 aa).

The Protein kinase domain maps to 13–297 (FEILGVVGEG…TEQCLNHPTF (285 aa)). ATP-binding positions include 19–27 (VGEGAYGVV) and Lys42. The active-site Proton acceptor is Asp135. Disordered regions lie at residues 300–349 (QRLL…IQNL), 382–566 (KTYQ…RHSK), 646–834 (SPQP…TQSQ), and 848–960 (ASNH…ETAL). 2 stretches are compositionally biased toward polar residues: residues 319 to 336 (ESST…TALQ) and 382 to 402 (KTYQ…NNNI). Ser407 is subject to Phosphoserine. The span at 407-417 (SPKEAKSKTEF) shows a compositional bias: basic and acidic residues. Composition is skewed to polar residues over residues 434–462 (LKSN…QPNE), 473–482 (IPQSSRSPSY), and 510–548 (EPST…SGRN). Position 479 is a phosphoserine (Ser479). Basic and acidic residues-rich tracts occupy residues 549-559 (NRNEGTLDSRR) and 679-704 (QKSE…RHLY). Ser720 carries the phosphoserine modification. The span at 728 to 748 (HENNVSTRVSSLPSESSSGTN) shows a compositional bias: polar residues. A Phosphoserine modification is found at Ser761. Basic and acidic residues predominate over residues 769–778 (EQLKEKEKQG). Residues 791-816 (QTVPNSDSPDLLTLQKSIHSASTPSS) show a composition bias toward polar residues. Positions 817 to 827 (RPKEWRPEKIS) are enriched in basic and acidic residues. 3 stretches are compositionally biased toward polar residues: residues 862-872 (LTAQQTKNSFS), 880-890 (SQASGGSSNIR), and 914-928 (SSVT…SYSE).

It belongs to the protein kinase superfamily. CMGC Ser/Thr protein kinase family. CDC2/CDKX subfamily. Interacts with MECP2. Autophosphorylated. As to expression, expressed in brain, lung, kidney, prostate, ovary, placenta, pancreas and testis. Predominant transcript in brain.

It is found in the nucleus. It localises to the cytoplasm. The protein resides in the cytoskeleton. The protein localises to the cilium basal body. Its subcellular location is the microtubule organizing center. It is found in the centrosome. It carries out the reaction L-seryl-[protein] + ATP = O-phospho-L-seryl-[protein] + ADP + H(+). The catalysed reaction is L-threonyl-[protein] + ATP = O-phospho-L-threonyl-[protein] + ADP + H(+). Functionally, mediates phosphorylation of MECP2. May regulate ciliogenesis. This chain is Cyclin-dependent kinase-like 5, found in Homo sapiens (Human).